A 419-amino-acid chain; its full sequence is Gustatory receptor for bitter taste 93a (419 aa).

Topologically, residues 1–55 (MFSSSSAMTGKRAESWSRLLLLWLYRCARGLLVLSSSLDRDKLQLKATKQGSRNR) are cytoplasmic. The helical transmembrane segment at 56-76 (FLHILWRCIVVMIYAGLWPML) threads the bilayer. Topologically, residues 77 to 90 (TSAVIGKRLESYAD) are extracellular. A helical membrane pass occupies residues 91 to 111 (VLALAQSMSVSILAVISFVIQ). The Cytoplasmic segment spans residues 112 to 145 (ARGENQFREVLNRYLALYQRICLTTRLRHLFPTK). A helical membrane pass occupies residues 146-166 (FVVFFLLKLFFTLCGCFHEII). Residues 167-184 (PLFENSHFDDISQMVGTG) lie on the Extracellular side of the membrane. A helical membrane pass occupies residues 185 to 205 (FGIYMWLGTLCVLDACFLGFL). Residues 206 to 277 (VSGILYEHMA…NSFRRILQWQ (72 aa)) are Cytoplasmic-facing. A helical membrane pass occupies residues 278-298 (ILFYIYLNFINICLMLYQYIL). Over 299–305 (HFLNDDE) the chain is Extracellular. A helical transmembrane segment spans residues 306-326 (VVFVSIVMAFVKLANLVLLMM). At 327–383 (CADYTVRQSEVPKKLPLDIVCSDMDERWDKSVETFLGQLQTQRLEIKVLGFFHLNNE) the chain is on the cytoplasmic side. A helical transmembrane segment spans residues 384-404 (FILLILSAIISYLFILIQFGI). The Extracellular segment spans residues 405-419 (TGGFEASEDIKNRFD).

Belongs to the insect chemoreceptor superfamily. Gustatory receptor (GR) family. Gr93a subfamily. In larvae, is expressed in neurons of the dorsal pharyngeal sense organs.

It is found in the cell membrane. Its function is as follows. Gustatory receptor required for response to the bitter in taste neurons. Gr93a cells respond to bitter compounds such as caffeine. Flies avoid bitter substances, suggesting that Gr93a neuron activity is sufficient to mediate avoidance behavior. The sequence is that of Gustatory receptor for bitter taste 93a (Gr93a) from Drosophila melanogaster (Fruit fly).